Reading from the N-terminus, the 409-residue chain is Inner membrane transport protein YqeG (409 aa).

At 1–25 (MSNIWSKEETLWSFALYGTAVGAGT) the chain is on the periplasmic side. Residues 26–46 (LFLPIQLGSAGAVVLFITALV) traverse the membrane as a helical segment. Over 47-87 (AWPLTYWPHKALCQFILSSKTSAGEGITGAVTHYYGKKIGN) the chain is Cytoplasmic. A helical transmembrane segment spans residues 88–108 (LITTLYFIAFFVVVLIYAVAI). Over 109-127 (TNSLTEQLAKHMVIDLRIR) the chain is Periplasmic. A helical transmembrane segment spans residues 128 to 148 (MLVSLGVVLILNLIFLMGRHA). The Cytoplasmic segment spans residues 149–151 (TIR). The helical transmembrane segment at 152–172 (VMGFLVFPLIAYFLFLSIYLV) threads the bilayer. Residues 173-193 (GSWQPDLLTTQVEFNQNTLHQ) are Periplasmic-facing. A helical membrane pass occupies residues 194–214 (IWISIPVMVFAFSHTPIISTF). Over 215 to 235 (AIDRREKYGEHAMDKCKKIMK) the chain is Cytoplasmic. Residues 236-256 (VAYLIICISVLFFVFSCLLSI) form a helical membrane-spanning segment. Residues 257-276 (PPSYIEAAKEEGVTILSALS) are Periplasmic-facing. A helical transmembrane segment spans residues 277-297 (MLPNAPAWLSISGIIVAVVAM). The Cytoplasmic segment spans residues 298–329 (SKSFLGTYFGVIEGATEVVKTTLQQVGVKKSR). A helical transmembrane segment spans residues 330 to 350 (AFNRALSIMLVSLITFIVCCI). At 351-353 (NPN) the chain is on the periplasmic side. The chain crosses the membrane as a helical span at residues 354–374 (AISMIYAISGPLIAMILFIMP). Over 375–388 (TLSTYLIPALKPWR) the chain is Cytoplasmic. Residues 389-409 (SIGNLITLIVGILCVSVMFFS) form a helical membrane-spanning segment.

It belongs to the amino acid/polyamine transporter 2 family. SdaC/TdcC subfamily.

The protein localises to the cell inner membrane. The polypeptide is Inner membrane transport protein YqeG (yqeG) (Escherichia coli O6:H1 (strain CFT073 / ATCC 700928 / UPEC)).